Consider the following 277-residue polypeptide: 4-hydroxy-tetrahydrodipicolinate reductase (277 aa).

Residue 9 to 14 (GATGRM) coordinates NAD(+). Residue Lys-37 participates in NADP(+) binding. Residue 75-77 (GTS) coordinates NAD(+). His-132 (proton donor/acceptor) is an active-site residue. Residue Lys-136 is the Proton donor of the active site. 142 to 143 (GT) is a binding site for (S)-2,3,4,5-tetrahydrodipicolinate. Residues 245 to 277 (SRERATQTAPTGAASGPVDDGGPSGQAATVTSA) are disordered.

Belongs to the DapB family.

It is found in the cytoplasm. It catalyses the reaction (S)-2,3,4,5-tetrahydrodipicolinate + NAD(+) + H2O = (2S,4S)-4-hydroxy-2,3,4,5-tetrahydrodipicolinate + NADH + H(+). It carries out the reaction (S)-2,3,4,5-tetrahydrodipicolinate + NADP(+) + H2O = (2S,4S)-4-hydroxy-2,3,4,5-tetrahydrodipicolinate + NADPH + H(+). Its pathway is amino-acid biosynthesis; L-lysine biosynthesis via DAP pathway; (S)-tetrahydrodipicolinate from L-aspartate: step 4/4. Its function is as follows. Catalyzes the conversion of 4-hydroxy-tetrahydrodipicolinate (HTPA) to tetrahydrodipicolinate. The sequence is that of 4-hydroxy-tetrahydrodipicolinate reductase from Clavibacter sepedonicus (Clavibacter michiganensis subsp. sepedonicus).